The sequence spans 428 residues: Cyclic AMP-responsive element-binding protein 3-like protein 3-A (428 aa).

Over 1–286 (MENYSDQGGD…VMNGSNKPVQ (286 aa)) the chain is Cytoplasmic. The segment covering 67-83 (VSGSPVWSPSPSDSGIS) has biased composition (low complexity). Residues 67-104 (VSGSPVWSPSPSDSGISEDPHSDHIDSPPPNASPPMEP) form a disordered region. Positions 93–103 (SPPPNASPPME) are enriched in pro residues. The region spanning 210 to 273 (ILKKIRRKIR…ISLMEQLRRL (64 aa)) is the bZIP domain. The tract at residues 212–241 (KKIRRKIRNKQSAQESRKKKKEYIDGLESR) is basic motif. The segment at 252–273 (LQRKVFQLEKCNISLMEQLRRL) is leucine-zipper. A helical; Signal-anchor for type II membrane protein membrane pass occupies residues 287–303 (AGTCVLVLLLSFTLILL). The Lumenal portion of the chain corresponds to 304-428 (PNLKPFTDTK…SRRSPHADDM (125 aa)). A disordered region spans residues 381–428 (TEYDPESHNHSFDQHDEHHHGDPITGHVATVTLNPRRGSRRSPHADDM). Over residues 385 to 402 (PESHNHSFDQHDEHHHGD) the composition is skewed to basic and acidic residues. Residue asparagine 389 is glycosylated (N-linked (GlcNAc...) asparagine).

It belongs to the bZIP family. ATF subfamily. As to quaternary structure, binds DNA as a dimer. Post-translationally, controlled by regulated intramembrane proteolysis (RIP). A fragment containing the cytoplasmic transcription factor domain is released by proteolysis. The cleavage seems to be performed sequentially by site-1 and site-2 proteases.

The protein localises to the endoplasmic reticulum membrane. The protein resides in the nucleus. Functionally, transcriptional activator. Binds the cAMP response element (CRE). Activates transcription through box-B element and CRE. Seems to function synergistically with atf6. Regulates FGF21 transcription. This chain is Cyclic AMP-responsive element-binding protein 3-like protein 3-A (creb3l3a), found in Danio rerio (Zebrafish).